Here is a 164-residue protein sequence, read N- to C-terminus: Protein-export protein SecB (164 aa).

This sequence belongs to the SecB family. As to quaternary structure, homotetramer, a dimer of dimers. One homotetramer interacts with 1 SecA dimer.

It is found in the cytoplasm. Functionally, one of the proteins required for the normal export of preproteins out of the cell cytoplasm. It is a molecular chaperone that binds to a subset of precursor proteins, maintaining them in a translocation-competent state. It also specifically binds to its receptor SecA. This is Protein-export protein SecB from Pseudomonas syringae pv. tomato (strain ATCC BAA-871 / DC3000).